The chain runs to 295 residues: MSKVTGSERVKRGMAEMQKGGVIMDVVNAEQAKIAEEAGAVAVMALERVPSDIRAAGGVARMANPKIVEEVMNAVSIPVMAKGRIGHITEARVLESMGVDYIDESEVLTPADEEYHLRKDTFTVPFVCGCRNLGEAARRIGEGAAMLRTKGEPGTGNIVEAVRHMRQVNSEVSRLTVMNDDEIMTEAKNIGAPYEVLKNIKENGKLPVVNFAAGGVATPQDAALMMELGADGVFVGSGIFKSEDPEKFAKAIVQATTHYQDYELIGRLAKELGIAMKGLDINDLSLEERMQERGW.

Aspartate 25 contacts D-ribose 5-phosphate. Lysine 82 functions as the Schiff-base intermediate with D-ribose 5-phosphate in the catalytic mechanism. Glycine 154 contacts D-ribose 5-phosphate. Arginine 166 serves as a coordination point for D-glyceraldehyde 3-phosphate. Residues glycine 215 and glycine 236–serine 237 contribute to the D-ribose 5-phosphate site.

It belongs to the PdxS/SNZ family. In terms of assembly, in the presence of PdxT, forms a dodecamer of heterodimers.

The enzyme catalyses aldehydo-D-ribose 5-phosphate + D-glyceraldehyde 3-phosphate + L-glutamine = pyridoxal 5'-phosphate + L-glutamate + phosphate + 3 H2O + H(+). The protein operates within cofactor biosynthesis; pyridoxal 5'-phosphate biosynthesis. Catalyzes the formation of pyridoxal 5'-phosphate from ribose 5-phosphate (RBP), glyceraldehyde 3-phosphate (G3P) and ammonia. The ammonia is provided by the PdxT subunit. Can also use ribulose 5-phosphate and dihydroxyacetone phosphate as substrates, resulting from enzyme-catalyzed isomerization of RBP and G3P, respectively. The protein is Pyridoxal 5'-phosphate synthase subunit PdxS of Staphylococcus saprophyticus subsp. saprophyticus (strain ATCC 15305 / DSM 20229 / NCIMB 8711 / NCTC 7292 / S-41).